A 324-amino-acid chain; its full sequence is Glyoxylate/hydroxypyruvate reductase B (324 aa).

Catalysis depends on residues R237 and E266. H285 functions as the Proton donor in the catalytic mechanism.

The protein belongs to the D-isomer specific 2-hydroxyacid dehydrogenase family. GhrB subfamily. Homodimer.

The protein resides in the cytoplasm. The enzyme catalyses glycolate + NADP(+) = glyoxylate + NADPH + H(+). It carries out the reaction (R)-glycerate + NAD(+) = 3-hydroxypyruvate + NADH + H(+). It catalyses the reaction (R)-glycerate + NADP(+) = 3-hydroxypyruvate + NADPH + H(+). In terms of biological role, catalyzes the NADPH-dependent reduction of glyoxylate and hydroxypyruvate into glycolate and glycerate, respectively. The sequence is that of Glyoxylate/hydroxypyruvate reductase B from Salmonella heidelberg (strain SL476).